A 288-amino-acid chain; its full sequence is Serine/threonine-protein acetyltransferase YopJ (288 aa).

Residues histidine 109 and glutamate 128 contribute to the active site. Residue histidine 109 participates in CoA binding. 167–168 serves as a coordination point for CoA; sequence RS. Cysteine 172 is a catalytic residue. Residues 182-185 and 224-225 each bind 1D-myo-inositol hexakisphosphate; these read KLYI and KH. 227 to 230 contributes to the CoA binding site; it reads QGKK. Residue arginine 257 coordinates 1D-myo-inositol hexakisphosphate. 266–270 is a CoA binding site; the sequence is DGKEL.

The protein belongs to the acetyltransferase YopJ family. Requires 1D-myo-inositol hexakisphosphate as cofactor.

Its subcellular location is the secreted. It carries out the reaction L-threonyl-[protein] + acetyl-CoA = O-acetyl-L-threonyl-[protein] + CoA. The catalysed reaction is L-seryl-[protein] + acetyl-CoA = O-acetyl-L-seryl-[protein] + CoA. Its activity is regulated as follows. 1D-myo-inositol hexakisphosphate activates protein-acetyltransferase activity via an allosteric mechanism: 1D-myo-inositol hexakisphosphate-binding induces a conformational rearrangement that stimulates the interaction with acetyl-CoA. In terms of biological role, serine/threonine-protein acetyltransferase translocated into infected cells, which inhibits the host immune response and induces cell death by mediating acetylation of target proteins. Inhibits the MAPK and NF-kappa-B signaling pathways by acetylating protein-kinases such as MAP2K1, MAP2K6, MAP3K7/TAK1 and I-kappa-B kinase (CHUK/IKKA and IKBKB) on serine and threonine residues critical for their activation by phosphorylation, thereby preventing protein-kinase activation. Promotes pyroptosis, a programmed cell death, in host cells by mediating acetylation of MAP3K7/TAK1: MAP3K7/TAK1 inactivation triggers activation of caspase-8 (CASP8), followed by CASP8-dependent cleavage of gasdermin-D (GSDMD) and induction of pyroptosis. In Yersinia pestis, this protein is Serine/threonine-protein acetyltransferase YopJ.